Consider the following 183-residue polypeptide: Endoribonuclease AbiQ (183 aa).

It belongs to the ToxN/AbiQ toxin family. Forms a triangular heterohexamer with a single 35-nt-long repeat of RNA antitoxin AntiQ.

Its subcellular location is the cytoplasm. Its function is as follows. Toxic component of a type III toxin-antitoxin (TA) system. An endoribonuclease that is probably sequence-specific. It is neutralized by its cognate antitoxin RNA AntiQ, which has 2.8 35 nucleotide-long repeats. Cannot be cloned in L.lactis subsp. cremoris strain NZ9000 in the absence of the antitoxin gene; expression in strain NZ9000 even in the presence of antiQ inhibits growth in a bacteriostatic fashion. Confers resistance to 936 and c2 phages but not P335 phages in L.lactis, causes an abortive infection (Abi phenotype). Viral DNA is replicated but not cleaved from its concatemeric form, while the viral major structural protein is produced normally in the presence of this protein. Operon expression in E.coli confers resistance to 3 phages of the Myoviridae family (T4, RB69 and phage 2) and 1 of the Siphoviridae family (T5), but not other tested phages (T1, T3, lambda vir, HK97, Mu and pilH alpha). The presence of this operon in L.lactis subsp. lactis strain IL1403 during phage P008 infection alters the viral transcription profiles. The polypeptide is Endoribonuclease AbiQ (Lactococcus lactis subsp. lactis (Streptococcus lactis)).